The following is a 313-amino-acid chain: Small ribosomal subunit biogenesis GTPase RsgA (313 aa).

In terms of domain architecture, CP-type G spans 82–235 (REKLIAANAT…IIDSPGIQQF (154 aa)). GTP contacts are provided by residues 127-130 (NKTD) and 177-185 (GQSGMGKST). 4 residues coordinate Zn(2+): Cys259, Cys264, His266, and Cys272.

Belongs to the TRAFAC class YlqF/YawG GTPase family. RsgA subfamily. In terms of assembly, monomer. Associates with 30S ribosomal subunit, binds 16S rRNA. The cofactor is Zn(2+).

It localises to the cytoplasm. One of several proteins that assist in the late maturation steps of the functional core of the 30S ribosomal subunit. Helps release RbfA from mature subunits. May play a role in the assembly of ribosomal proteins into the subunit. Circularly permuted GTPase that catalyzes slow GTP hydrolysis, GTPase activity is stimulated by the 30S ribosomal subunit. This is Small ribosomal subunit biogenesis GTPase RsgA from Nitrosospira multiformis (strain ATCC 25196 / NCIMB 11849 / C 71).